Consider the following 516-residue polypeptide: uncharacterized protein (516 aa).

In terms of domain architecture, uDENN spans 31–185; the sequence is ACIFLSKFDM…LDKFDIFEKF (155 aa). The cDENN domain occupies 211 to 365; sequence HLVEYLPYWT…LEVYEKLILG (155 aa). The dDENN domain occupies 367 to 513; it reads LQEDASTNAT…DISNLPECLG (147 aa). 2 S-palmitoyl cysteine lipidation sites follow: Cys511 and Cys516.

Post-translationally, palmitoylated by AKR1.

The protein localises to the lipid droplet. Its function is as follows. May be involved in lipid metabolism. This is an uncharacterized protein from Saccharomyces cerevisiae (strain ATCC 204508 / S288c) (Baker's yeast).